The primary structure comprises 38 residues: Antifungal protein 5 (38 aa).

It belongs to the plant LTP family.

Its function is as follows. Possesses potent antifungal activity against F.graminearum but not P.infestans. In Malva parviflora (Little mallow), this protein is Antifungal protein 5.